The following is a 344-amino-acid chain: Cytochrome c biogenesis protein CcsA (344 aa).

Helical transmembrane passes span asparagine 21–proline 41, leucine 45–leucine 65, leucine 80–histidine 100, tryptophan 106–leucine 126, valine 151–isoleucine 171, leucine 252–asparagine 272, tryptophan 287–tryptophan 307, and alanine 313–leucine 333.

This sequence belongs to the CcmF/CycK/Ccl1/NrfE/CcsA family. In terms of assembly, may interact with ccs1.

Its subcellular location is the cellular thylakoid membrane. Its function is as follows. Required during biogenesis of c-type cytochromes (cytochrome c6 and cytochrome f) at the step of heme attachment. The chain is Cytochrome c biogenesis protein CcsA from Synechococcus sp. (strain JA-3-3Ab) (Cyanobacteria bacterium Yellowstone A-Prime).